Reading from the N-terminus, the 485-residue chain is NADH-quinone oxidoreductase subunit N (485 aa).

14 helical membrane-spanning segments follow: residues leucine 8–isoleucine 28, phenylalanine 35–valine 55, glycine 71–alanine 91, phenylalanine 105–leucine 125, serine 127–phenylalanine 147, tyrosine 159–alanine 179, leucine 203–phenylalanine 223, proline 235–methionine 255, valine 271–glutamine 291, leucine 297–glutamine 317, valine 326–leucine 346, alanine 373–isoleucine 393, tryptophan 408–valine 430, and isoleucine 455–isoleucine 475.

Belongs to the complex I subunit 2 family. NDH-1 is composed of 13 different subunits. Subunits NuoA, H, J, K, L, M, N constitute the membrane sector of the complex.

The protein resides in the cell inner membrane. The catalysed reaction is a quinone + NADH + 5 H(+)(in) = a quinol + NAD(+) + 4 H(+)(out). NDH-1 shuttles electrons from NADH, via FMN and iron-sulfur (Fe-S) centers, to quinones in the respiratory chain. The immediate electron acceptor for the enzyme in this species is believed to be ubiquinone. Couples the redox reaction to proton translocation (for every two electrons transferred, four hydrogen ions are translocated across the cytoplasmic membrane), and thus conserves the redox energy in a proton gradient. The sequence is that of NADH-quinone oxidoreductase subunit N from Shigella boydii serotype 18 (strain CDC 3083-94 / BS512).